The sequence spans 236 residues: Uridylate kinase (236 aa).

12 to 15 (KISG) contributes to the ATP binding site. Residues 20-25 (GTNGYG) form an involved in allosteric activation by GTP region. A UMP-binding site is contributed by Gly-54. ATP is bound by residues Gly-55 and Arg-59. Residues Asp-72 and 133 to 140 (TGNPYFST) contribute to the UMP site. ATP-binding residues include Tyr-166 and Asp-169.

Belongs to the UMP kinase family. Homohexamer.

Its subcellular location is the cytoplasm. The catalysed reaction is UMP + ATP = UDP + ADP. It participates in pyrimidine metabolism; CTP biosynthesis via de novo pathway; UDP from UMP (UMPK route): step 1/1. With respect to regulation, allosterically activated by GTP. Inhibited by UTP. Functionally, catalyzes the reversible phosphorylation of UMP to UDP. This Clostridium acetobutylicum (strain ATCC 824 / DSM 792 / JCM 1419 / IAM 19013 / LMG 5710 / NBRC 13948 / NRRL B-527 / VKM B-1787 / 2291 / W) protein is Uridylate kinase.